A 352-amino-acid chain; its full sequence is Uroporphyrinogen decarboxylase (352 aa).

Residues Arg26–Arg30, Asp76, Tyr153, Ser208, and His323 each bind substrate.

Belongs to the uroporphyrinogen decarboxylase family. Homodimer.

It localises to the cytoplasm. It carries out the reaction uroporphyrinogen III + 4 H(+) = coproporphyrinogen III + 4 CO2. It functions in the pathway porphyrin-containing compound metabolism; protoporphyrin-IX biosynthesis; coproporphyrinogen-III from 5-aminolevulinate: step 4/4. In terms of biological role, catalyzes the decarboxylation of four acetate groups of uroporphyrinogen-III to yield coproporphyrinogen-III. This Prochlorococcus marinus (strain NATL1A) protein is Uroporphyrinogen decarboxylase.